We begin with the raw amino-acid sequence, 290 residues long: ATP synthase gamma chain (290 aa).

The protein belongs to the ATPase gamma chain family. As to quaternary structure, F-type ATPases have 2 components, CF(1) - the catalytic core - and CF(0) - the membrane proton channel. CF(1) has five subunits: alpha(3), beta(3), gamma(1), delta(1), epsilon(1). CF(0) has three main subunits: a, b and c.

It localises to the cell inner membrane. Functionally, produces ATP from ADP in the presence of a proton gradient across the membrane. The gamma chain is believed to be important in regulating ATPase activity and the flow of protons through the CF(0) complex. This chain is ATP synthase gamma chain, found in Chlorobium luteolum (strain DSM 273 / BCRC 81028 / 2530) (Pelodictyon luteolum).